A 327-amino-acid chain; its full sequence is Mycothiol acetyltransferase (327 aa).

N-acetyltransferase domains follow at residues 11–159 and 162–327; these read EPHG…VTLP and VQIR…EGTS. Glu-42 lines the 1D-myo-inositol 2-(L-cysteinylamino)-2-deoxy-alpha-D-glucopyranoside pocket. 89–91 contacts acetyl-CoA; the sequence is LVI. The 1D-myo-inositol 2-(L-cysteinylamino)-2-deoxy-alpha-D-glucopyranoside site is built by Glu-189, Lys-228, and Glu-251. Residues 255–257 and 262–268 each bind acetyl-CoA; these read LGV and QGLGLGR. A 1D-myo-inositol 2-(L-cysteinylamino)-2-deoxy-alpha-D-glucopyranoside-binding site is contributed by Tyr-289. An acetyl-CoA-binding site is contributed by 294 to 299; the sequence is NAPAIR.

The protein belongs to the acetyltransferase family. MshD subfamily. In terms of assembly, monomer.

The catalysed reaction is 1D-myo-inositol 2-(L-cysteinylamino)-2-deoxy-alpha-D-glucopyranoside + acetyl-CoA = mycothiol + CoA + H(+). In terms of biological role, catalyzes the transfer of acetyl from acetyl-CoA to desacetylmycothiol (Cys-GlcN-Ins) to form mycothiol. The protein is Mycothiol acetyltransferase of Acidothermus cellulolyticus (strain ATCC 43068 / DSM 8971 / 11B).